We begin with the raw amino-acid sequence, 154 residues long: Ribonuclease H (154 aa).

Positions 1–142 (MRKQVEIFTD…CDELARAAAG (142 aa)) constitute an RNase H type-1 domain. The Mg(2+) site is built by Asp10, Glu48, Asp70, and Asp134.

This sequence belongs to the RNase H family. Monomer. Mg(2+) is required as a cofactor.

Its subcellular location is the cytoplasm. It carries out the reaction Endonucleolytic cleavage to 5'-phosphomonoester.. Endonuclease that specifically degrades the RNA of RNA-DNA hybrids. The chain is Ribonuclease H from Pectobacterium carotovorum subsp. carotovorum (strain PC1).